The primary structure comprises 388 residues: MNQTVDGVAPNKSGPVIEIDHVTKRFADYVAVADADFSIASGEFFSMLGPSGCGKTTTLRMIAGFETPTSGAIRLEGTDVSRVPPHKRNVNTVFQHYALFPHMSVWDNVAYGPRSMKKDKSEVKRRVDELLEVVRLTDFAKRKPGQLSGGQQQRVALARALVNYPSALLLDEPLGALDLKLRHAMQFELKRIQREVGITFIYVTHDQEEALTMSDRIAVMNAGNVEQIGTPTDIYDRPATVFVANFIGQANLWSGRQTGRLNRDYVEIDVLGSKLKARPGDTAIEAGGHATLMVRPERLRVSMEPPVGDVAAVRATVRDMTFQGPVVRLSLVAPDDSPIVAHVGTEQQLPLLRPGDEVYVCWSPDASLVLPAADIPTTEDLEEMLDES.

The region spanning 17–247 is the ABC transporter domain; the sequence is IEIDHVTKRF…PATVFVANFI (231 aa). Position 49 to 56 (49 to 56) interacts with ATP; the sequence is GPSGCGKT.

Belongs to the ABC transporter superfamily. Spermidine/putrescine importer (TC 3.A.1.11.1) family. The complex is composed of two ATP-binding proteins (PotA), two transmembrane proteins (PotB and PotC) and a solute-binding protein (PotD).

Its subcellular location is the cell membrane. The enzyme catalyses ATP + H2O + polyamine-[polyamine-binding protein]Side 1 = ADP + phosphate + polyamineSide 2 + [polyamine-binding protein]Side 1.. In terms of biological role, part of the ABC transporter complex PotABCD involved in spermidine/putrescine import. Responsible for energy coupling to the transport system. The sequence is that of Spermidine/putrescine import ATP-binding protein PotA from Mycobacterium sp. (strain KMS).